The chain runs to 519 residues: Probable anion transporter 3, chloroplastic (519 aa).

A chloroplast-targeting transit peptide spans 1–76; it reads MAPPGQLLPL…PPPPATSLPG (76 aa). Residues 56-72 show a composition bias toward pro residues; that stretch reads LPFAPPRRLSRPPPPAT. The tract at residues 56 to 82 is disordered; the sequence is LPFAPPRRLSRPPPPATSLPGASPGGG. The next 12 helical transmembrane spans lie at 100-120, 138-158, 166-186, 188-208, 229-249, 253-273, 326-346, 362-382, 403-423, 424-444, 460-480, and 488-508; these read VAAM…VMSV, VVQS…GALV, VMAY…WAAA, SLWL…VALP, IAMA…PIIM, GIFG…LVWI, WALI…LSWM, AWFS…AGVV, IGFV…SPVI, ASAW…GFLV, MSNT…GFFV, and GFLI…DIFA.

It belongs to the major facilitator superfamily. Sodium/anion cotransporter (TC 2.A.1.14) family.

The protein resides in the plastid. Its subcellular location is the chloroplast membrane. Probable anion transporter. In Oryza sativa subsp. japonica (Rice), this protein is Probable anion transporter 3, chloroplastic (PHT4;3).